Here is a 591-residue protein sequence, read N- to C-terminus: Homeobox domain-containing transcription factor HOB1 (591 aa).

The span at 1–15 (MEGKNEDMHTPRGPE) shows a compositional bias: basic and acidic residues. Disordered stretches follow at residues 1 to 37 (MEGK…DMLG) and 148 to 168 (IAGP…RSPA). Residues 176–223 (IAILRESYARNPNPDRKELERLAARTGRPWNKIREYFRQRRNKLRGLE) constitute a DNA-binding region (homeobox). Disordered regions lie at residues 420 to 463 (DAGL…PRES) and 543 to 563 (DAIE…ALTE). Residues 427-441 (QGEEDQPPTVEESDQ) are compositionally biased toward acidic residues. The segment covering 543 to 560 (DAIERRNAGESKRKRDDA) has biased composition (basic and acidic residues).

It is found in the nucleus. General stress-responsive transcription factor that governs multiple stress responses and adaptations. Plays a key role in virulence. Mediates the expression of LAC1, which is the major laccase involved in melanin synthesis. Positively regulates BZP4 induction under conditions of nutrient starvation and basal expression levels of MBS1 and USV101, 3 major transcription factors that independently contribute to melanin production. Also acts as a key regulator of ergosterol gene expression. The sequence is that of Homeobox domain-containing transcription factor HOB1 from Cryptococcus neoformans var. grubii serotype A (strain H99 / ATCC 208821 / CBS 10515 / FGSC 9487) (Filobasidiella neoformans var. grubii).